Here is a 500-residue protein sequence, read N- to C-terminus: POU domain, class 3, transcription factor 3 (500 aa).

A compositionally biased stretch (gly residues) spans 32-52 (GGGGGGGGGGGGAGGGGGGMQ). Disordered regions lie at residues 32–63 (GGGG…SGAY), 122–190 (WSGS…WGAA), 231–319 (NGML…TPTS), and 461–500 (EKRM…TSVQ). 2 stretches are compositionally biased toward pro residues: residues 134 to 146 (QQPP…PPQG) and 171 to 181 (HLGPPPPPPHQ). Residues 241 to 251 (GGGGGGAGGGA) are compositionally biased toward gly residues. A compositionally biased stretch (basic residues) spans 270-287 (HHHHHHHHAHPHPPHPHH). A compositionally biased stretch (gly residues) spans 293 to 303 (HHGGGGGGAGP). The 75-residue stretch at 314 to 388 (EDTPTSDDLE…LLNKWLEEAD (75 aa)) folds into the POU-specific domain. The segment at residues 406-465 (KRKKRTSIEVSVKGALESHFLKCPKPSAQEITNLADSLQLEKEVVRVWFCNRRQKEKRMT) is a DNA-binding region (homeobox). Positions 468–486 (GIQQQTPDDVYSQVGTVSA) are enriched in polar residues.

This sequence belongs to the POU transcription factor family. Class-3 subfamily. As to quaternary structure, homodimer. Brain.

It is found in the nucleus. In terms of biological role, transcription factor that acts synergistically with SOX11 and SOX4. Plays a role in neuronal development. Is implicated in an enhancer activity at the embryonic met-mesencephalic junction; the enhancer element contains the octamer motif (5'-ATTTGCAT-3'). This Homo sapiens (Human) protein is POU domain, class 3, transcription factor 3.